The primary structure comprises 596 residues: Probable lysosomal cobalamin transporter (596 aa).

The next 10 helical transmembrane spans lie at 13–33, 45–65, 99–119, 150–170, 201–221, 318–338, 353–373, 381–401, 425–445, and 512–532; these read IWVAYAVAVALVLLVAIITTF, VSIVAIVSLTSLLATVFLLPV, VVYYTLYSFDALLCLIVIPFA, LGFVFLVLILFLLGFFVPAAG, LLITLGTFLYTLYTGAGLALL, LLGGILLLLLSILVWASMLIT, GYILGHINVFQPVNWIFVQSA, ILMALLVLFFFGSSITGIATI, IATVMLALIILAINYAIAMIV, and VFGAIDFWAQFAFLGVFMVVF. N543 is a glycosylation site (N-linked (GlcNAc...) asparagine). The tract at residues 576-596 is disordered; it reads GRAKNRNGYGTGGGEGSNGRG. Over residues 584–596 the composition is skewed to gly residues; the sequence is YGTGGGEGSNGRG.

The protein belongs to the LIMR family. LMBRD1 subfamily.

It localises to the lysosome membrane. Functionally, probable lysosomal cobalamin transporter. Required to export cobalamin from lysosomes allowing its conversion to cofactors. This chain is Probable lysosomal cobalamin transporter, found in Podospora anserina (strain S / ATCC MYA-4624 / DSM 980 / FGSC 10383) (Pleurage anserina).